We begin with the raw amino-acid sequence, 172 residues long: Dual-action ribosomal maturation protein DarP (172 aa).

The protein belongs to the DarP family.

The protein localises to the cytoplasm. In terms of biological role, member of a network of 50S ribosomal subunit biogenesis factors which assembles along the 30S-50S interface, preventing incorrect 23S rRNA structures from forming. Promotes peptidyl transferase center (PTC) maturation. The protein is Dual-action ribosomal maturation protein DarP of Azotobacter vinelandii (strain DJ / ATCC BAA-1303).